We begin with the raw amino-acid sequence, 426 residues long: Glutamate-1-semialdehyde 2,1-aminomutase (426 aa).

An N6-(pyridoxal phosphate)lysine modification is found at lysine 264.

Belongs to the class-III pyridoxal-phosphate-dependent aminotransferase family. HemL subfamily. The cofactor is pyridoxal 5'-phosphate.

The protein localises to the cytoplasm. The catalysed reaction is (S)-4-amino-5-oxopentanoate = 5-aminolevulinate. It functions in the pathway porphyrin-containing compound metabolism; protoporphyrin-IX biosynthesis; 5-aminolevulinate from L-glutamyl-tRNA(Glu): step 2/2. This Methanocella arvoryzae (strain DSM 22066 / NBRC 105507 / MRE50) protein is Glutamate-1-semialdehyde 2,1-aminomutase.